A 369-amino-acid polypeptide reads, in one-letter code: Glutamine synthetase 2 cytoplasmic (369 aa).

In terms of domain architecture, GS beta-grasp spans 32–112 (VQATYVWIDG…VMCDTYKFDG (81 aa)). Residues 119 to 369 (KRKTCLEVAN…AILRTICLDE (251 aa)) enclose the GS catalytic domain.

It belongs to the glutamine synthetase family. As to quaternary structure, homooctamer.

The protein localises to the cytoplasm. The catalysed reaction is L-glutamate + NH4(+) + ATP = L-glutamine + ADP + phosphate + H(+). The protein is Glutamine synthetase 2 cytoplasmic (Gs2) of Drosophila melanogaster (Fruit fly).